Reading from the N-terminus, the 244-residue chain is SURF1-like protein (244 aa).

2 helical membrane passes run 7–23 and 201–219; these read ILTTFIILTSLGFWQLS and YAITWFGLAIFLIVIYVIY.

Belongs to the SURF1 family.

It localises to the cell membrane. This is SURF1-like protein from Rickettsia prowazekii (strain Madrid E).